Here is a 641-residue protein sequence, read N- to C-terminus: MEGPAFSKPLKDKINPWGPLIVLGILIRAGVSVQHDSPHQVFNVTWRVTNLMTGQTANATSLLGTMTDAFPKLYFDLCDLIGDDWDETGLGCRTPGGRKRARTFDFYVCPGHTVPTGCGGPREGYCGKWGCETTGQAYWKPSSSWDLISLKRRNTPQNQGPCYDSSAVSSDIKGATPGGRCNPLVLEFTDAGKKASWDGPKVWGLRLYRSTGTDPVTRFSLTRQVLNIGPRVPIGPNPVITDQLPPSRPVQIMLPRPPQPPPPGAASIVPETAPPSQQPGTGDRLLNLVDGAYQALNLTSPDKTQECWLCLVAGPPYYEGVAVLGTYSNHTSAPANCSVASQHKLTLSEVTGQGLCVGAVPKTHQALCNTTQKTSDGSYYLAAPAGTIWACNTGLTPCLSTTVLDLTTDYCVLVELWPKVTYHSPGYVYGQFERKTKYKREPVSLTLALLLGGLTMGGIAAGVGTGTTALVATKQFEQLQAAIHTDLGALEKSVSALEKSLTSLSEVVLQNRRGLDLLFLKEGGLCAALKEECCFYADHTGVVRDSMAKLRERLNQRQKLFESGQGWFEGLFNRSPWFTTLISTIMGPLIILLLILLFGPCILNRLVQFVKDRISVVQALVLTQQYHQLKSIDPEEVESRE.

An N-terminal signal peptide occupies residues 1–32 (MEGPAFSKPLKDKINPWGPLIVLGILIRAGVS). At 33–581 (VQHDSPHQVF…FNRSPWFTTL (549 aa)) the chain is on the extracellular side. Asparagine 43 and asparagine 58 each carry an N-linked (GlcNAc...) asparagine glycan. 2 disulfides stabilise this stretch: cysteine 109/cysteine 126 and cysteine 118/cysteine 131. Residues 256-281 (RPPQPPPPGAASIVPETAPPSQQPGT) form a disordered region. N-linked (GlcNAc...) asparagine glycosylation occurs at asparagine 297. 6 cysteine pairs are disulfide-bonded: cysteine 307-cysteine 310, cysteine 307-cysteine 534, cysteine 337-cysteine 391, cysteine 356-cysteine 368, cysteine 398-cysteine 411, and cysteine 526-cysteine 533. The CXXC motif lies at 307–310 (CWLC). Asparagine 336 carries an N-linked (GlcNAc...) asparagine glycan. Asparagine 369 is a glycosylation site (N-linked (GlcNAc...) asparagine). The segment at 443–463 (VSLTLALLLGGLTMGGIAAGV) is fusion peptide. Coiled-coil stretches lie at residues 471 to 520 (VATK…LLFL) and 530 to 566 (KEEC…SGQG). Residues 509–525 (LQNRRGLDLLFLKEGGL) are immunosuppression. A CX6CC motif is present at residues 526–534 (CAALKEECC). The chain crosses the membrane as a helical span at residues 582–602 (ISTIMGPLIILLLILLFGPCI). The S-palmitoyl cysteine moiety is linked to residue cysteine 601. At 603–641 (LNRLVQFVKDRISVVQALVLTQQYHQLKSIDPEEVESRE) the chain is on the cytoplasmic side. The YXXL motif; contains endocytosis signal motif lies at 626–629 (YHQL).

The mature envelope protein (Env) consists of a trimer of SU-TM heterodimers attached by a labile interchain disulfide bond. In terms of processing, specific enzymatic cleavages in vivo yield mature proteins. Envelope glycoproteins are synthesized as an inactive precursor that is N-glycosylated and processed likely by host cell furin or by a furin-like protease in the Golgi to yield the mature SU and TM proteins. The cleavage site between SU and TM requires the minimal sequence [KR]-X-[KR]-R. The R-peptide is released from the C-terminus of the cytoplasmic tail of the TM protein upon particle formation as a result of proteolytic cleavage by the viral protease. Cleavage of this peptide is required for TM to become fusogenic. The CXXC motif is highly conserved across a broad range of retroviral envelope proteins. It is thought to participate in the formation of a labile disulfide bond possibly with the CX6CC motif present in the transmembrane protein. Isomerization of the intersubunit disulfide bond to an SU intrachain disulfide bond is thought to occur upon receptor recognition in order to allow membrane fusion. Post-translationally, the transmembrane protein is palmitoylated. In terms of processing, the R-peptide is palmitoylated.

The protein resides in the virion membrane. It is found in the cell membrane. Its function is as follows. The surface protein (SU) attaches the virus to the host cell by binding to its receptor. This interaction triggers the refolding of the transmembrane protein (TM) and is thought to activate its fusogenic potential by unmasking its fusion peptide. Fusion occurs at the host cell plasma membrane. The transmembrane protein (TM) acts as a class I viral fusion protein. Under the current model, the protein has at least 3 conformational states: pre-fusion native state, pre-hairpin intermediate state, and post-fusion hairpin state. During viral and target cell membrane fusion, the coiled coil regions (heptad repeats) assume a trimer-of-hairpins structure, positioning the fusion peptide in close proximity to the C-terminal region of the ectodomain. The formation of this structure appears to drive apposition and subsequent fusion of viral and target cell membranes. Membranes fusion leads to delivery of the nucleocapsid into the cytoplasm. This chain is MLV-related proviral Env polyprotein, found in Mus musculus (Mouse).